Here is an 86-residue protein sequence, read N- to C-terminus: EMBRYO SURROUNDING FACTOR 1-like protein 2 (86 aa).

Positions 1-21 (MKSHIAIICIIMLSFFSMHEY) are cleaved as a signal peptide. Intrachain disulfides connect C39–C54, C44–C82, C52–C78, and C55–C65.

It belongs to the MEG family.

The chain is EMBRYO SURROUNDING FACTOR 1-like protein 2 (ESFL2) from Arabidopsis thaliana (Mouse-ear cress).